The sequence spans 110 residues: Small ribosomal subunit protein bS16 (110 aa).

A disordered region spans residues alanine 87 to glycine 110.

It belongs to the bacterial ribosomal protein bS16 family.

This Bradyrhizobium sp. (strain BTAi1 / ATCC BAA-1182) protein is Small ribosomal subunit protein bS16.